Reading from the N-terminus, the 423-residue chain is MNYVTFNQDYTCLAVGTAKGFRIYHTDPFSKIFTGDNENVTIIEMLFSTSLVAIKQSPRHIVIQNTKRGTVICELTFPSAVLAVRLNRKRFAVLLEEEIYLYDIQNMGLLYTISTSANPNAICALSASSENCYLAYPLPKPREETGDKRPAHAPPLSPYVAPTSGEVLIFDAKSLKAVNVVEAHRAPLSCIALNNDGTLLATASETGTIIRVFSVPDGQKLYQFRRGTYPSTIFSLSFNMSSTLLCVSSNSDTIHIFRLGGPVTGMPESPRSPNGKDKWKRSRSFDSDNGSPPAGTSPGSEMADVPVEKSKSTGTFGSMIRRSSQMMGKSVAGVVGGYLPQAVTEMWEPARDFAFIKLPKGGMGATSRSGPLKSVVAISSSSPQVMVVTSDGGFYIYSIDMEAGGEGVLVKQYSGRRQSRAAS.

WD repeat units lie at residues 1–34, 183–223, 228–267, and 367–407; these read MNYVTFNQDYTCLAVGTAKGFRIYHTDPFSKIFT, AHRA…KLYQ, TYPSTIFSLSFNMSSTLLCVSSNSDTIHIFRLGGPVTGMP, and SRSG…GGEG. Residues 224–228 carry the L/FRRG motif motif; it reads FRRGT. The segment at 260-320 is disordered; the sequence is GGPVTGMPES…KSTGTFGSMI (61 aa).

This sequence belongs to the WD repeat PROPPIN family. Component of the PI(3,5)P2 regulatory complex.

The protein localises to the preautophagosomal structure membrane. The protein resides in the vacuole membrane. It localises to the endosome membrane. The PI(3,5)P2 regulatory complex regulates both the synthesis and turnover of phosphatidylinositol 3,5-bisphosphate (PtdIns(3,5)P2). Necessary for proper vacuole morphology. Plays an important role in osmotically-induced vacuole fragmentation. Required for cytoplasm to vacuole transport (Cvt) vesicle formation, pexophagy and starvation-induced autophagy. Involved in correct atg9 trafficking to the pre-autophagosomal structure. Might also be involved in premeiotic DNA replication. The polypeptide is Autophagy-related protein 18 (atg18) (Sclerotinia sclerotiorum (strain ATCC 18683 / 1980 / Ss-1) (White mold)).